The sequence spans 520 residues: 2-isopropylmalate synthase (520 aa).

The 263-residue stretch at 12 to 274 (VVIFDTTLRD…WCNVESTMLT (263 aa)) folds into the Pyruvate carboxyltransferase domain. Residues Asp21, His209, His211, and Asn245 each contribute to the Mn(2+) site. Positions 398–520 (KLTSLTVIAG…RDVPSAAAAS (123 aa)) are regulatory domain.

Belongs to the alpha-IPM synthase/homocitrate synthase family. LeuA type 1 subfamily. In terms of assembly, homodimer. Requires Mn(2+) as cofactor.

Its subcellular location is the cytoplasm. The catalysed reaction is 3-methyl-2-oxobutanoate + acetyl-CoA + H2O = (2S)-2-isopropylmalate + CoA + H(+). It participates in amino-acid biosynthesis; L-leucine biosynthesis; L-leucine from 3-methyl-2-oxobutanoate: step 1/4. Functionally, catalyzes the condensation of the acetyl group of acetyl-CoA with 3-methyl-2-oxobutanoate (2-ketoisovalerate) to form 3-carboxy-3-hydroxy-4-methylpentanoate (2-isopropylmalate). This is 2-isopropylmalate synthase from Nitrobacter hamburgensis (strain DSM 10229 / NCIMB 13809 / X14).